A 278-amino-acid polypeptide reads, in one-letter code: UPF0276 protein Sama_1305 (278 aa).

Belongs to the UPF0276 family.

The polypeptide is UPF0276 protein Sama_1305 (Shewanella amazonensis (strain ATCC BAA-1098 / SB2B)).